We begin with the raw amino-acid sequence, 316 residues long: Pantothenate kinase (316 aa).

An ATP-binding site is contributed by 95-102 (GSVAVGKS).

Belongs to the prokaryotic pantothenate kinase family.

The protein resides in the cytoplasm. It catalyses the reaction (R)-pantothenate + ATP = (R)-4'-phosphopantothenate + ADP + H(+). It functions in the pathway cofactor biosynthesis; coenzyme A biosynthesis; CoA from (R)-pantothenate: step 1/5. This chain is Pantothenate kinase, found in Klebsiella pneumoniae subsp. pneumoniae (strain ATCC 700721 / MGH 78578).